The sequence spans 666 residues: tRNA 5-methylaminomethyl-2-thiouridine biosynthesis bifunctional protein MnmC (666 aa).

Residues 1–245 form a tRNA (mnm(5)s(2)U34)-methyltransferase region; it reads MKQYAIQPAN…KREMLCGVMA (245 aa). An FAD-dependent cmnm(5)s(2)U34 oxidoreductase region spans residues 270–666; that stretch reads IGGGIASALL…RKLLKGKAVK (397 aa).

It in the N-terminal section; belongs to the methyltransferase superfamily. tRNA (mnm(5)s(2)U34)-methyltransferase family. In the C-terminal section; belongs to the DAO family. The cofactor is FAD.

The protein resides in the cytoplasm. It catalyses the reaction 5-aminomethyl-2-thiouridine(34) in tRNA + S-adenosyl-L-methionine = 5-methylaminomethyl-2-thiouridine(34) in tRNA + S-adenosyl-L-homocysteine + H(+). Its function is as follows. Catalyzes the last two steps in the biosynthesis of 5-methylaminomethyl-2-thiouridine (mnm(5)s(2)U) at the wobble position (U34) in tRNA. Catalyzes the FAD-dependent demodification of cmnm(5)s(2)U34 to nm(5)s(2)U34, followed by the transfer of a methyl group from S-adenosyl-L-methionine to nm(5)s(2)U34, to form mnm(5)s(2)U34. The chain is tRNA 5-methylaminomethyl-2-thiouridine biosynthesis bifunctional protein MnmC from Citrobacter koseri (strain ATCC BAA-895 / CDC 4225-83 / SGSC4696).